The sequence spans 130 residues: Large ribosomal subunit protein bL12 (130 aa).

Belongs to the bacterial ribosomal protein bL12 family. As to quaternary structure, homodimer. Part of the ribosomal stalk of the 50S ribosomal subunit. Forms a multimeric L10(L12)X complex, where L10 forms an elongated spine to which 2 to 4 L12 dimers bind in a sequential fashion. Binds GTP-bound translation factors.

Functionally, forms part of the ribosomal stalk which helps the ribosome interact with GTP-bound translation factors. Is thus essential for accurate translation. This is Large ribosomal subunit protein bL12 from Chlamydia muridarum (strain MoPn / Nigg).